The following is a 307-amino-acid chain: Elongation factor Ts (307 aa).

The segment at 79–82 (TDFV) is involved in Mg(2+) ion dislocation from EF-Tu.

The protein belongs to the EF-Ts family.

The protein localises to the cytoplasm. Functionally, associates with the EF-Tu.GDP complex and induces the exchange of GDP to GTP. It remains bound to the aminoacyl-tRNA.EF-Tu.GTP complex up to the GTP hydrolysis stage on the ribosome. In Rhizobium meliloti (strain 1021) (Ensifer meliloti), this protein is Elongation factor Ts.